Reading from the N-terminus, the 483-residue chain is MLTLDTLNTMLAVSEEGMVEEMILALLASPQLVIFFEKFPRLKNAVTADLPRWREALRSRLKDAHVPPELTEEVMCYQQSQLLSTPQFIVQLPQILALLHRLHSPYAAQAKQLTESNSTFTPALHTLFLQRWRLSLVVQATTLNQQLLEEEREQLLSDVQERMTLSGQLEPTLAENDNAAGRLWDMSAGQLKRGDYQLIVKYGEFLAAQPELMQLAEQLGRSREAKSVPKKDAPMETFRTLVREPATVPEQVDGIQQGDDILRLLPPELATLGITELEYEFYRRLVEKQLLTYRLHGEAWREKVTERPVVHQDVDEQPRGPFIVCVDTSGSMGGFNEQCAKAFCLALMRVALADNRRCFIMLFSTDVVRYELSGPEGIEQAIRFLSQRFRGGTDIASCFRAIIERMQGREWFDADAVVISDFIAQRLPDDVVSKVGELQRLHQHRFHAVAMSAHGKPGIMRIFDHIWRFDTGMRSRLLRRWRR.

Belongs to the ViaA family. As to quaternary structure, homodimer. Interacts with RavA.

It localises to the cytoplasm. Its function is as follows. Component of the RavA-ViaA chaperone complex, which may act on the membrane to optimize the function of some of the respiratory chains. ViaA stimulates the ATPase activity of RavA. The polypeptide is Regulatory protein ViaA (Salmonella heidelberg (strain SL476)).